A 69-amino-acid polypeptide reads, in one-letter code: Defensin-like protein 166 (69 aa).

Residues 1-15 (MIIVIIFLVIYFNNQ) form the signal peptide. 4 disulfide bridges follow: Cys-19–Cys-68, Cys-24–Cys-44, Cys-29–Cys-62, and Cys-33–Cys-64.

The protein belongs to the DEFL family.

Its subcellular location is the secreted. The chain is Defensin-like protein 166 from Arabidopsis thaliana (Mouse-ear cress).